The chain runs to 464 residues: Serine carboxypeptidase-like 22 (464 aa).

An N-terminal signal peptide occupies residues 1-22; the sequence is MARTHLLFLLFVLLSLATSSTS. Asn52, Asn113, and Asn137 each carry an N-linked (GlcNAc...) asparagine glycan. Cystine bridges form between Cys86-Cys346, Cys247-Cys258, and Cys282-Cys314. Ser179 is an active-site residue. Asn290 and Asn335 each carry an N-linked (GlcNAc...) asparagine glycan. Residues Asp385 and His437 contribute to the active site.

The protein belongs to the peptidase S10 family. As to expression, expression not detected.

The protein resides in the secreted. In terms of biological role, probable carboxypeptidase. The polypeptide is Serine carboxypeptidase-like 22 (SCPL22) (Arabidopsis thaliana (Mouse-ear cress)).